We begin with the raw amino-acid sequence, 772 residues long: C-Maf-inducing protein (772 aa).

Positions 52-160 (KLLQEGDIQV…WFHSLQWKKK (109 aa)) constitute a PH domain. 4 LRR repeats span residues 662-683 (NLEN…QLIK), 686-706 (SLKQ…RVLS), 711-731 (TLQV…LALS), and 735-755 (SLCN…EDLK).

It localises to the nucleus. The protein localises to the cytoplasm. Its function is as follows. Plays a role in T-cell signaling pathway. This Xenopus laevis (African clawed frog) protein is C-Maf-inducing protein (cmip).